The sequence spans 743 residues: Protein STB5 (743 aa).

Positions Cys22–Cys49 form a DNA-binding region, zn(2)-C6 fungal-type. Disordered regions lie at residues Val81–Ala100 and Asn155–Asn249. Polar residues-rich tracts occupy residues Pro85–Ser99 and Asn155–Ile198. Residues Asn213–Thr238 show a composition bias toward low complexity. The segment covering Pro239–Asn249 has biased composition (polar residues).

The protein resides in the nucleus. Binds to SIN3. In Saccharomyces cerevisiae (strain ATCC 204508 / S288c) (Baker's yeast), this protein is Protein STB5 (STB5).